Here is a 455-residue protein sequence, read N- to C-terminus: Transmembrane protease serine 5 (455 aa).

The Cytoplasmic segment spans residues 1–49 (MSPTLDDQSPMEIRCTEEGAGPGIFRMELGDQRQSISQSQRWCCLQRGC). Residues 50–70 (VILGVLGLLAGAGIASWLLVL) traverse the membrane as a helical; Signal-anchor for type II membrane protein segment. The Extracellular segment spans residues 71 to 455 (YLWPAASPSI…DWIHDTVQVR (385 aa)). The 96-residue stretch at 112–207 (FRINGEDLLL…SGRIVSLKCS (96 aa)) folds into the SRCR domain. 7 cysteine pairs are disulfide-bonded: cysteine 135-cysteine 196, cysteine 148-cysteine 206, cysteine 209-cysteine 328, cysteine 243-cysteine 259, cysteine 342-cysteine 411, cysteine 374-cysteine 390, and cysteine 401-cysteine 429. 2 N-linked (GlcNAc...) asparagine glycosylation sites follow: asparagine 163 and asparagine 170. The Peptidase S1 domain maps to 218-453 (IVGGQAVASG…FLDWIHDTVQ (236 aa)). Catalysis depends on charge relay system residues histidine 258 and aspartate 308. N-linked (GlcNAc...) asparagine glycans are attached at residues asparagine 319 and asparagine 375. The active-site Charge relay system is serine 405.

Belongs to the peptidase S1 family.

The protein resides in the cell membrane. In terms of biological role, may play a role in hearing. The chain is Transmembrane protease serine 5 (Tmprss5) from Mus musculus (Mouse).